A 232-amino-acid chain; its full sequence is Aliphatic sulfonates import ATP-binding protein SsuB 2 (232 aa).

The ABC transporter domain occupies 1-216 (MDIRVDRKAF…PRDRRDPLLA (216 aa)). 33 to 40 (GPSGCGKS) is an ATP binding site.

This sequence belongs to the ABC transporter superfamily. Aliphatic sulfonates importer (TC 3.A.1.17.2) family. In terms of assembly, the complex is composed of two ATP-binding proteins (SsuB), two transmembrane proteins (SsuC) and a solute-binding protein (SsuA).

The protein localises to the cell inner membrane. It catalyses the reaction ATP + H2O + aliphatic sulfonate-[sulfonate-binding protein]Side 1 = ADP + phosphate + aliphatic sulfonateSide 2 + [sulfonate-binding protein]Side 1.. Its function is as follows. Part of the ABC transporter complex SsuABC involved in aliphatic sulfonates import. Responsible for energy coupling to the transport system. This chain is Aliphatic sulfonates import ATP-binding protein SsuB 2, found in Pseudomonas syringae pv. tomato (strain ATCC BAA-871 / DC3000).